The primary structure comprises 341 residues: Methionine import ATP-binding protein MetN (341 aa).

The 240-residue stretch at 2 to 241 (INLQDVSKVY…PKEQMTKRFV (240 aa)) folds into the ABC transporter domain. 38–45 (GYSGAGKS) contributes to the ATP binding site.

The protein belongs to the ABC transporter superfamily. Methionine importer (TC 3.A.1.24) family. In terms of assembly, the complex is composed of two ATP-binding proteins (MetN), two transmembrane proteins (MetP) and a solute-binding protein (MetQ).

The protein localises to the cell membrane. The catalysed reaction is L-methionine(out) + ATP + H2O = L-methionine(in) + ADP + phosphate + H(+). It catalyses the reaction D-methionine(out) + ATP + H2O = D-methionine(in) + ADP + phosphate + H(+). Its function is as follows. Part of the ABC transporter complex MetNPQ involved in methionine import. Responsible for energy coupling to the transport system. It has also been shown to be involved in methionine sulfoxide transport. The polypeptide is Methionine import ATP-binding protein MetN (Bacillus subtilis (strain 168)).